The primary structure comprises 841 residues: Protein translocase subunit SecA (841 aa).

ATP contacts are provided by residues Gln85, 103-107, and Asp492; that span reads GEGKT. The disordered stretch occupies residues 790–814; the sequence is IQGQTTAHQPKEGDEEKQAKKKPVR. Basic and acidic residues predominate over residues 798–807; sequence QPKEGDEEKQ. Positions 825, 827, 836, and 837 each coordinate Zn(2+).

Belongs to the SecA family. Monomer and homodimer. Part of the essential Sec protein translocation apparatus which comprises SecA, SecYEG and auxiliary proteins SecDF. Other proteins may also be involved. The cofactor is Zn(2+).

It is found in the cell membrane. The protein localises to the cytoplasm. It carries out the reaction ATP + H2O + cellular proteinSide 1 = ADP + phosphate + cellular proteinSide 2.. Part of the Sec protein translocase complex. Interacts with the SecYEG preprotein conducting channel. Has a central role in coupling the hydrolysis of ATP to the transfer of proteins into and across the cell membrane, serving as an ATP-driven molecular motor driving the stepwise translocation of polypeptide chains across the membrane. The sequence is that of Protein translocase subunit SecA from Bacillus licheniformis (strain ATCC 14580 / DSM 13 / JCM 2505 / CCUG 7422 / NBRC 12200 / NCIMB 9375 / NCTC 10341 / NRRL NRS-1264 / Gibson 46).